A 186-amino-acid chain; its full sequence is Probable RNA 2'-phosphotransferase (186 aa).

The protein belongs to the KptA/TPT1 family.

Its function is as follows. Removes the 2'-phosphate from RNA via an intermediate in which the phosphate is ADP-ribosylated by NAD followed by a presumed transesterification to release the RNA and generate ADP-ribose 1''-2''-cyclic phosphate (APPR&gt;P). May function as an ADP-ribosylase. This Clostridium perfringens (strain SM101 / Type A) protein is Probable RNA 2'-phosphotransferase.